We begin with the raw amino-acid sequence, 377 residues long: Lipoyl synthase, mitochondrial (377 aa).

The N-terminal 77 residues, 1–77 (MFRRGGRILN…LPNGSVHKRL (77 aa)), are a transit peptide targeting the mitochondrion. Positions 107, 112, 118, 138, 142, 145, and 353 each coordinate [4Fe-4S] cluster. One can recognise a Radical SAM core domain in the interval 123–342 (DKTRATATIM…RKRAEELGFL (220 aa)).

The protein belongs to the radical SAM superfamily. Lipoyl synthase family. It depends on [4Fe-4S] cluster as a cofactor.

Its subcellular location is the mitochondrion. It carries out the reaction [[Fe-S] cluster scaffold protein carrying a second [4Fe-4S](2+) cluster] + N(6)-octanoyl-L-lysyl-[protein] + 2 oxidized [2Fe-2S]-[ferredoxin] + 2 S-adenosyl-L-methionine + 4 H(+) = [[Fe-S] cluster scaffold protein] + N(6)-[(R)-dihydrolipoyl]-L-lysyl-[protein] + 4 Fe(3+) + 2 hydrogen sulfide + 2 5'-deoxyadenosine + 2 L-methionine + 2 reduced [2Fe-2S]-[ferredoxin]. Its pathway is protein modification; protein lipoylation via endogenous pathway; protein N(6)-(lipoyl)lysine from octanoyl-[acyl-carrier-protein]: step 2/2. In terms of biological role, catalyzes the radical-mediated insertion of two sulfur atoms into the C-6 and C-8 positions of the octanoyl moiety bound to the lipoyl domains of lipoate-dependent enzymes, thereby converting the octanoylated domains into lipoylated derivatives. In Schizosaccharomyces japonicus (strain yFS275 / FY16936) (Fission yeast), this protein is Lipoyl synthase, mitochondrial.